The primary structure comprises 246 residues: Transcription factor A, mitochondrial (246 aa).

A mitochondrion-targeting transit peptide spans 1-42 (MAFLRSMWGVLSALGRSGAAVCIGCGSRLRSPFSFVYLPKCF). The HMG box 1 DNA-binding region spans 50-118 (PKKPVSSYLR…VYKEKISRFK (69 aa)). Ser-55, Ser-56, and Ser-61 each carry phosphoserine; by PKA. Residue Thr-122 is modified to Phosphothreonine. Positions 155 to 219 (PKRPRSAYNV…RYHNEMKSWE (65 aa)) form a DNA-binding region, HMG box 2. Ser-160 is subject to Phosphoserine; by PKA. Ser-193 and Ser-195 each carry phosphoserine.

In terms of assembly, monomer; binds DNA as a monomer. Homodimer. Component of the mitochondrial transcription initiation complex, composed at least of TFB2M, TFAM and POLRMT. In this complex TFAM recruits POLRMT to the promoter whereas TFB2M induces structural changes in POLRMT to enable promoter opening and trapping of the DNA non-template strand. Upon metabolic stress, forms a complex composed of FOXO3, SIRT3, TFAM and POLRMT. Interacts with TFB1M and TFB2M. Interacts with CLPX; this enhances DNA-binding. In terms of processing, phosphorylation by PKA within the HMG box 1 impairs DNA binding and promotes degradation by the AAA+ Lon protease.

The protein resides in the mitochondrion. The protein localises to the mitochondrion matrix. It localises to the mitochondrion nucleoid. Binds to the mitochondrial light strand promoter and functions in mitochondrial transcription regulation. Component of the mitochondrial transcription initiation complex, composed at least of TFB2M, TFAM and POLRMT that is required for basal transcription of mitochondrial DNA. In this complex, TFAM recruits POLRMT to a specific promoter whereas TFB2M induces structural changes in POLRMT to enable promoter opening and trapping of the DNA non-template strand. Required for accurate and efficient promoter recognition by the mitochondrial RNA polymerase. Promotes transcription initiation from the HSP1 and the light strand promoter by binding immediately upstream of transcriptional start sites. Is able to unwind DNA. Bends the mitochondrial light strand promoter DNA into a U-turn shape via its HMG boxes. Required for maintenance of normal levels of mitochondrial DNA. May play a role in organizing and compacting mitochondrial DNA. This is Transcription factor A, mitochondrial from Trachypithecus cristatus (Silvered leaf-monkey).